The following is a 532-amino-acid chain: Ankyrin repeat-containing protein At2g01680 (532 aa).

ANK repeat units lie at residues 9–38 (LTHQ…GDEL), 58–89 (AGET…TVKI), 93–122 (SDMN…ELCR), 127–156 (SNTS…SCAM), 161–190 (NGKT…AIVG), 195–224 (KGQT…TILN), and 229–259 (KGNT…EVNA). 4 consecutive transmembrane segments (helical) span residues 354-374 (ITVV…NLPG), 396-416 (VFCL…VVQI), 436-456 (LMWA…FAVV), and 467-487 (ITLL…YFVF).

It localises to the membrane. This Arabidopsis thaliana (Mouse-ear cress) protein is Ankyrin repeat-containing protein At2g01680.